Here is a 225-residue protein sequence, read N- to C-terminus: NAD(P)H-quinone oxidoreductase subunit K, chloroplastic (225 aa).

[4Fe-4S] cluster is bound by residues cysteine 43, cysteine 44, cysteine 108, and cysteine 139.

It belongs to the complex I 20 kDa subunit family. In terms of assembly, NDH is composed of at least 16 different subunits, 5 of which are encoded in the nucleus. The cofactor is [4Fe-4S] cluster.

The protein localises to the plastid. It is found in the chloroplast thylakoid membrane. It carries out the reaction a plastoquinone + NADH + (n+1) H(+)(in) = a plastoquinol + NAD(+) + n H(+)(out). The enzyme catalyses a plastoquinone + NADPH + (n+1) H(+)(in) = a plastoquinol + NADP(+) + n H(+)(out). Its function is as follows. NDH shuttles electrons from NAD(P)H:plastoquinone, via FMN and iron-sulfur (Fe-S) centers, to quinones in the photosynthetic chain and possibly in a chloroplast respiratory chain. The immediate electron acceptor for the enzyme in this species is believed to be plastoquinone. Couples the redox reaction to proton translocation, and thus conserves the redox energy in a proton gradient. This Eucalyptus globulus subsp. globulus (Tasmanian blue gum) protein is NAD(P)H-quinone oxidoreductase subunit K, chloroplastic.